The following is a 142-amino-acid chain: Group IIE secretory phospholipase A2 (142 aa).

Positions 1–19 (MKPPIALACLCLLVPLAGG) are cleaved as a signal peptide. Residues Asp-41, Gly-43, Tyr-45, Gly-47, and Gly-49 each contribute to the Ca(2+) site. 7 cysteine pairs are disulfide-bonded: Cys-44/Cys-135, Cys-46/Cys-62, Cys-61/Cys-115, Cys-67/Cys-142, Cys-68/Cys-108, Cys-77/Cys-101, and Cys-95/Cys-106. Residue His-65 is part of the active site. Ca(2+) is bound at residue Asp-66. Asp-109 is an active-site residue. Residues Tyr-130 and Asn-132 each contribute to the Ca(2+) site.

The protein belongs to the phospholipase A2 family. It depends on Ca(2+) as a cofactor. As to expression, highly expressed in skin and uterus, and at lower levels in various other tissues. Expressed in hair follicles, specifically localized in companion cells of the outer root sheath and cuticular cells of the inner root sheath in hair follicles during anagen. Expressed in white and brown adipose tissue.

It localises to the secreted. Its subcellular location is the cytoplasm. The enzyme catalyses a 1,2-diacyl-sn-glycero-3-phosphoethanolamine + H2O = a 1-acyl-sn-glycero-3-phosphoethanolamine + a fatty acid + H(+). It catalyses the reaction 1-hexadecanoyl-2-(9Z-octadecenoyl)-sn-glycero-3-phosphoethanolamine + H2O = 1-hexadecanoyl-sn-glycero-3-phosphoethanolamine + (9Z)-octadecenoate + H(+). It carries out the reaction 1-hexadecanoyl-2-(9Z,12Z-octadecadienoyl)-sn-glycero-3-phosphoethanolamine + H2O = 1-hexadecanoyl-sn-glycero-3-phosphoethanolamine + (9Z,12Z)-octadecadienoate + H(+). The catalysed reaction is 1-hexadecanoyl-2-(5Z,8Z,11Z,14Z-eicosatetraenoyl)-sn-glycero-3-phosphoethanolamine + H2O = 1-hexadecanoyl-sn-glycero-3-phosphoethanolamine + (5Z,8Z,11Z,14Z)-eicosatetraenoate + H(+). The enzyme catalyses 1,2-dihexadecanoyl-sn-glycero-3-phospho-(1'-sn-glycerol) + H2O = 1-hexadecanoyl-sn-glycero-3-phospho-(1'-sn-glycerol) + hexadecanoate + H(+). It catalyses the reaction 1-hexadecanoyl-2-(9Z-octadecenoyl)-sn-glycero-3-phosphoglycerol + H2O = 1-hexadecanoyl-sn-glycero-3-phosphoglycerol + (9Z)-octadecenoate + H(+). It carries out the reaction a 1,2-diacyl-sn-glycero-3-phosphocholine + H2O = a 1-acyl-sn-glycero-3-phosphocholine + a fatty acid + H(+). The catalysed reaction is 1,2-dihexadecanoyl-sn-glycero-3-phosphocholine + H2O = 1-hexadecanoyl-sn-glycero-3-phosphocholine + hexadecanoate + H(+). The enzyme catalyses 1-hexadecanoyl-2-(9Z-octadecenoyl)-sn-glycero-3-phosphocholine + H2O = 1-hexadecanoyl-sn-glycero-3-phosphocholine + (9Z)-octadecenoate + H(+). It catalyses the reaction 1-hexadecanoyl-2-(9Z,12Z-octadecadienoyl)-sn-glycero-3-phosphocholine + H2O = (9Z,12Z)-octadecadienoate + 1-hexadecanoyl-sn-glycero-3-phosphocholine + H(+). It carries out the reaction 1-hexadecanoyl-2-(4Z,7Z,10Z,13Z,16Z,19Z-docosahexaenoyl)-sn-glycero-3-phosphocholine + H2O = (4Z,7Z,10Z,13Z,16Z,19Z)-docosahexaenoate + 1-hexadecanoyl-sn-glycero-3-phosphocholine + H(+). In terms of biological role, secretory calcium-dependent phospholipase A2 that primarily targets extracellular phospholipids. Hydrolyzes the ester bond of the fatty acyl group attached at sn-2 position of phospholipids (phospholipase A2 activity), releasing various unsaturated fatty acids including oleoate, linoleoate, arachidonate, docosahexaenoate and lysophosphatidylethanolamines in preference to lysophosphatidylcholines. In response to high-fat diet, hydrolyzes minor lipoprotein phospholipids including phosphatidylserines, phosphatidylinositols and phosphatidylglycerols, altering lipoprotein composition and fat storage in adipose tissue and liver. May act in an autocrine and paracrine manner. Contributes to lipid remodeling of cellular membranes and generation of lipid mediators involved in pathogen clearance. Cleaves sn-2 fatty acyl chains of phosphatidylglycerols and phosphatidylethanolamines, which are major components of membrane phospholipids in bacteria. Acts as a hair follicle phospholipase A2. Selectively releases lysophosphatidylethanolamines (LPE) and various unsaturated fatty acids in skin to regulate hair follicle homeostasis. May regulate the inflammatory response by releasing arachidonate, a precursor of prostaglandins and leukotrienes. Upon allergen exposure, may participate in allergic inflammatory response by enhancing leukotriene C4 synthesis and degranulation in mast cells. The polypeptide is Group IIE secretory phospholipase A2 (Pla2g2e) (Mus musculus (Mouse)).